The chain runs to 327 residues: Endo-1,4-beta-xylanase C (327 aa).

The first 15 residues, 1-15 (MKFSSLLFTASLVAA), serve as a signal peptide directing secretion. One can recognise a GH10 domain in the interval 43 to 325 (TITDPNLLQS…KPAYTAVVNA (283 aa)). Glu154 functions as the Proton donor in the catalytic mechanism. The active-site Nucleophile is the Glu262. The cysteines at positions 280 and 286 are disulfide-linked.

The protein belongs to the glycosyl hydrolase 10 (cellulase F) family.

Its subcellular location is the secreted. The enzyme catalyses Endohydrolysis of (1-&gt;4)-beta-D-xylosidic linkages in xylans.. Its pathway is glycan degradation; xylan degradation. With respect to regulation, weakly inhibited by the wheat xylanase inhibiting protein I (XIP-I). Endo-1,4-beta-xylanase involved in the hydrolysis of xylan, a major structural heterogeneous polysaccharide found in plant biomass representing the second most abundant polysaccharide in the biosphere, after cellulose. Plays an important role in causing fusarium head blight (FHB) on cereal crops. In Gibberella zeae (strain ATCC MYA-4620 / CBS 123657 / FGSC 9075 / NRRL 31084 / PH-1) (Wheat head blight fungus), this protein is Endo-1,4-beta-xylanase C (XYLC).